The sequence spans 132 residues: 3'-dehydrocarminate deglycosidase beta subunit (132 aa).

It belongs to the C-glycoside deglycosidase beta subunit family. As to quaternary structure, heterodimer composed of an alpha subunit (CarB) and a beta subunit (CarC). Requires Mg(2+) as cofactor.

The catalysed reaction is 3'-dehydrocarminate + H(+) = kermesate + 1,5-anhydro-D-erythro-hex-1-en-3-ulose. With respect to regulation, activity is strongly reduced in the presence of chelating agents. Carbon-carbon bond-cleaving enzyme which participates in a carminate degradation pathway. Cleaves the C-C bond in 3'-dehydrocarminate to form kermesate. Also shows weak activity with other C-glycosides, such as 3''-dehydropuerarin (3''-oxo-puerarin), 3''-dehydroisoorientin (3''-oxo-homoorientin) and 3'-dehydromangiferin (3'-oxo-mangiferin). The sequence is that of 3'-dehydrocarminate deglycosidase beta subunit from Microbacterium sp.